The sequence spans 636 residues: Nucleolar protein 9 (636 aa).

Residues 1-59 form a disordered region; sequence MGQGPRSPHKVGRRFPAGGKRGRGAKGSGRPLPGRKRQPWPPPDGRSEPAPDSHPHLSP. S7 is modified (phosphoserine). Basic and acidic residues predominate over residues 45–57; the sequence is GRSEPAPDSHPHL. 2 Pumilio repeats span residues 92 to 123 and 189 to 223; these read EVETQALALSTNRTGSEMLQELLGFSPLKPLC and EVCDDFLVYCGDTHGSFVVRTLLQVLGGTILESER. Residues 222–241 form a disordered region; that stretch reads ERARPRGSQSSEAQKTPAQE. Residues 228–238 are compositionally biased toward polar residues; that stretch reads GSQSSEAQKTP. Pumilio repeat units follow at residues 313–348, 351–386, 509–544, and 547–581; these read SVDGSPLLLFLRDQTSSRLLEQVLLVLEPPRLQSLF, HLQGQLQTLAAHPIANFPLQRLLDAVTTPELLSPVF, LTGPQLLSLAQSPAGSHVLDAILTSPSVTRKLRRRV, and NLKGQYVALACSRHGSRVLDAIWSGAALRARKEIA.

The protein belongs to the NOP9 family.

This Homo sapiens (Human) protein is Nucleolar protein 9 (NOP9).